The primary structure comprises 426 residues: Serine--tRNA ligase (426 aa).

Threonine 233–glutamate 235 contacts L-serine. Arginine 264–glutamate 266 is an ATP binding site. Glutamate 287 contacts L-serine. An ATP-binding site is contributed by glutamate 351–serine 354. Serine 387 is a binding site for L-serine.

This sequence belongs to the class-II aminoacyl-tRNA synthetase family. Type-1 seryl-tRNA synthetase subfamily. In terms of assembly, homodimer. The tRNA molecule binds across the dimer.

It localises to the cytoplasm. It carries out the reaction tRNA(Ser) + L-serine + ATP = L-seryl-tRNA(Ser) + AMP + diphosphate + H(+). It catalyses the reaction tRNA(Sec) + L-serine + ATP = L-seryl-tRNA(Sec) + AMP + diphosphate + H(+). It functions in the pathway aminoacyl-tRNA biosynthesis; selenocysteinyl-tRNA(Sec) biosynthesis; L-seryl-tRNA(Sec) from L-serine and tRNA(Sec): step 1/1. Catalyzes the attachment of serine to tRNA(Ser). Is also able to aminoacylate tRNA(Sec) with serine, to form the misacylated tRNA L-seryl-tRNA(Sec), which will be further converted into selenocysteinyl-tRNA(Sec). This Colwellia psychrerythraea (strain 34H / ATCC BAA-681) (Vibrio psychroerythus) protein is Serine--tRNA ligase.